The sequence spans 330 residues: Inactive serine protease 45 (330 aa).

The N-terminal stretch at 1 to 35 is a signal peptide; the sequence is MATSLRLLDAGPGSLRRWIPTCFAALLLLPPRPNL. Positions 45–291 constitute a Peptidase S1 domain; the sequence is VCGAPWWSDS…YTGWIKEQVS (247 aa). Disulfide bonds link Cys-75/Cys-91, Cys-172/Cys-249, Cys-207/Cys-230, and Cys-239/Cys-267. Asn-272 carries an N-linked (GlcNAc...) asparagine glycan.

The protein belongs to the peptidase S1 family.

Its subcellular location is the secreted. This is Inactive serine protease 45 (Prss45) from Rattus norvegicus (Rat).